Reading from the N-terminus, the 223-residue chain is Dephospho-CoA kinase (223 aa).

The 202-residue stretch at 3–204 folds into the DPCK domain; it reads VFGLSGGAGS…AGRHRFRVAR (202 aa). Position 11-16 (11-16) interacts with ATP; that stretch reads GSGKST.

This sequence belongs to the CoaE family.

It is found in the cytoplasm. It carries out the reaction 3'-dephospho-CoA + ATP = ADP + CoA + H(+). It participates in cofactor biosynthesis; coenzyme A biosynthesis; CoA from (R)-pantothenate: step 5/5. In terms of biological role, catalyzes the phosphorylation of the 3'-hydroxyl group of dephosphocoenzyme A to form coenzyme A. The sequence is that of Dephospho-CoA kinase from Anaplasma marginale (strain St. Maries).